A 353-amino-acid chain; its full sequence is Methylthioribose-1-phosphate isomerase (353 aa).

Residues 51-53 (RGA), Arg94, and Gln199 each bind substrate. The active-site Proton donor is Asp240. 250 to 251 (NK) is a substrate binding site.

This sequence belongs to the eIF-2B alpha/beta/delta subunits family. MtnA subfamily. In terms of assembly, homodimer.

The enzyme catalyses 5-(methylsulfanyl)-alpha-D-ribose 1-phosphate = 5-(methylsulfanyl)-D-ribulose 1-phosphate. The protein operates within amino-acid biosynthesis; L-methionine biosynthesis via salvage pathway; L-methionine from S-methyl-5-thio-alpha-D-ribose 1-phosphate: step 1/6. Its function is as follows. Catalyzes the interconversion of methylthioribose-1-phosphate (MTR-1-P) into methylthioribulose-1-phosphate (MTRu-1-P). The sequence is that of Methylthioribose-1-phosphate isomerase from Bacillus pumilus (strain SAFR-032).